Reading from the N-terminus, the 242-residue chain is Linker for activation of T-cells family member 1 (242 aa).

The Extracellular portion of the chain corresponds to 1–4 (MEAD). The chain crosses the membrane as a helical; Signal-anchor for type III membrane protein span at residues 5 to 28 (ALSPVGLGLLLLPFLVTLLAALCV). S-palmitoyl cysteine attachment occurs at residues Cys27 and Cys30. The Cytoplasmic portion of the chain corresponds to 29 to 242 (RCRELPVSYD…PDYENLQELN (214 aa)). Position 40 is a phosphothreonine (Thr40). A phosphoserine mark is found at Ser41, Ser44, Ser87, Ser104, Ser109, and Ser112. Positions 78–118 (QPDLLPIPRSPQPLGGSHRMPSSQQNSDDANSVASYENQEP) are disordered. Over residues 97 to 115 (MPSSQQNSDDANSVASYEN) the composition is skewed to polar residues. The interaction with PLCG1 stretch occupies residues 136-139 (YLVV). The residue at position 175 (Tyr175) is a Phosphotyrosine. 2 interaction with GRB2, GRAP2 and PIK3R1 regions span residues 175–178 (YVNV) and 195–198 (YVNV). The tract at residues 176 to 242 (VNVPESEESA…PDYENLQELN (67 aa)) is disordered. Phosphoserine is present on residues Ser199, Ser212, and Ser215. Over residues 217–234 (EVEDEGEEEGVDGEEAPD) the composition is skewed to acidic residues. Residue Tyr235 is modified to Phosphotyrosine.

In terms of assembly, when phosphorylated, interacts directly with the PIK3R1 subunit of phosphoinositide 3-kinase and the SH2 domains of GRB2, GRAP, GRAP2, PLCG1 and PLCG2. Interacts indirectly with CBL, SOS, VAV, and LCP2. Interacts with SHB and SKAP2. Interacts with FCGR1A. Interacts with CLNK. Interacts with GRB2, PLCG1 and THEMIS upon TCR activation in thymocytes. Interacts with THEMIS2. Post-translationally, phosphorylated on tyrosines by ZAP70 upon TCR activation, or by SYK upon other immunoreceptor activation; which leads to the recruitment of multiple signaling molecules. Is one of the most prominently tyrosine-phosphorylated proteins detected following TCR engagement. May be dephosphorylated by PTPRJ. Phosphorylated by ITK leading to the recruitment of VAV1 to LAT-containing complexes. Palmitoylation of Cys-27 and Cys-30 is required for raft targeting and efficient phosphorylation. In terms of processing, phosphorylated on tyrosines by ZAP70 upon TCR activation, or by SYK upon other immunoreceptor activation; which leads to the recruitment of multiple signaling molecules. Is one of the most prominently tyrosine-phosphorylated proteins detected following TCR engagement. May be dephosphorylated by PTPRJ. Phosphorylated by ITK leading to the recruitment of VAV1 to LAT-containing complexes. Post-translationally, 'Lys-63'-linked ubiquitinated by TRAF6. Expressed in T-cells and mast cells.

The protein localises to the cell membrane. Functionally, required for TCR (T-cell antigen receptor)- and pre-TCR-mediated signaling, both in mature T-cells and during their development. Involved in FCGR3 (low affinity immunoglobulin gamma Fc region receptor III)-mediated signaling in natural killer cells and FCER1 (high affinity immunoglobulin epsilon receptor)-mediated signaling in mast cells. Couples activation of these receptors and their associated kinases with distal intracellular events such as mobilization of intracellular calcium stores, PKC activation, MAPK activation or cytoskeletal reorganization through the recruitment of PLCG1, GRB2, GRAP2, and other signaling molecules. The protein is Linker for activation of T-cells family member 1 (Lat) of Mus musculus (Mouse).